The chain runs to 91 residues: UPF0298 protein spyM18_0447 (91 aa).

Belongs to the UPF0298 family.

It localises to the cytoplasm. The chain is UPF0298 protein spyM18_0447 from Streptococcus pyogenes serotype M18 (strain MGAS8232).